We begin with the raw amino-acid sequence, 20 residues long: Citrate synthase (20 aa).

This sequence belongs to the citrate synthase family. As to quaternary structure, homohexamer.

The enzyme catalyses oxaloacetate + acetyl-CoA + H2O = citrate + CoA + H(+). It participates in carbohydrate metabolism; tricarboxylic acid cycle; isocitrate from oxaloacetate: step 1/2. Its activity is regulated as follows. Allosterically inhibited by NADH. The protein is Citrate synthase (gltA) of Streptomyces hygroscopicus.